Consider the following 199-residue polypeptide: Probable nicotinate-nucleotide adenylyltransferase (199 aa).

Belongs to the NadD family.

The enzyme catalyses nicotinate beta-D-ribonucleotide + ATP + H(+) = deamido-NAD(+) + diphosphate. The protein operates within cofactor biosynthesis; NAD(+) biosynthesis; deamido-NAD(+) from nicotinate D-ribonucleotide: step 1/1. Functionally, catalyzes the reversible adenylation of nicotinate mononucleotide (NaMN) to nicotinic acid adenine dinucleotide (NaAD). In Chloroherpeton thalassium (strain ATCC 35110 / GB-78), this protein is Probable nicotinate-nucleotide adenylyltransferase.